We begin with the raw amino-acid sequence, 423 residues long: Glycine amidinotransferase, mitochondrial (423 aa).

The transit peptide at 1–43 (MLRVRCLRGGSRGAEAVHYIGSRLGRTLTGWVQRTFQSTQAAT) directs the protein to the mitochondrion. Residues serine 46 and serine 49 each carry the phosphoserine modification. Aspartate 170 lines the arginine pocket. Residues aspartate 254 and histidine 303 contribute to the active site. Residues aspartate 305, arginine 322, serine 354, and serine 355 each coordinate arginine. Lysine 385 carries the N6-acetyllysine modification. Cysteine 407 (amidino-cysteine intermediate) is an active-site residue.

This sequence belongs to the amidinotransferase family. Homodimer. There is an equilibrium between the monomeric and dimeric forms, shifted towards the side of the monomer. Expressed in brain, heart, kidney, liver, lung, salivary gland and skeletal muscle tissue, with the highest expression in kidney. Biallelically expressed in placenta and fetal tissues.

The protein localises to the mitochondrion inner membrane. Its subcellular location is the cytoplasm. The catalysed reaction is L-arginine + glycine = guanidinoacetate + L-ornithine. It catalyses the reaction 4-aminobutanoate + L-arginine = 4-guanidinobutanoate + L-ornithine. The enzyme catalyses beta-alanine + L-arginine = 3-guanidinopropanoate + L-ornithine. It carries out the reaction taurine + L-arginine = taurocyamine + L-ornithine. Its pathway is amine and polyamine biosynthesis; creatine biosynthesis; creatine from L-arginine and glycine: step 1/2. Transamidinase that catalyzes the transfer of the amidino group of L-arginine onto the amino moiety of acceptor metabolites such as glycine, beta-alanine, gamma-aminobutyric acid (GABA) and taurine yielding the corresponding guanidine derivatives. Catalyzes the rate-limiting step of creatine biosynthesis, namely the transfer of the amidino group from L-arginine to glycine to generate guanidinoacetate, which is then methylated by GAMT to form creatine. Provides creatine as a source for ATP generation in tissues with high energy demands, in particular skeletal muscle, heart and brain. The polypeptide is Glycine amidinotransferase, mitochondrial (GATM) (Homo sapiens (Human)).